Consider the following 226-residue polypeptide: Glyceraldehyde 3-phosphate phosphatase (226 aa).

The protein belongs to the HAD-like hydrolase superfamily. It depends on Mg(2+) as a cofactor.

Catalyzes the dephosphorylation of D,L-glyceraldehyde 3-phosphate in vitro. This Methanothermobacter thermautotrophicus (strain ATCC 29096 / DSM 1053 / JCM 10044 / NBRC 100330 / Delta H) (Methanobacterium thermoautotrophicum) protein is Glyceraldehyde 3-phosphate phosphatase.